We begin with the raw amino-acid sequence, 126 residues long: Large ribosomal subunit protein uL22 (126 aa).

It belongs to the universal ribosomal protein uL22 family. In terms of assembly, part of the 50S ribosomal subunit.

Functionally, this protein binds specifically to 23S rRNA; its binding is stimulated by other ribosomal proteins, e.g. L4, L17, and L20. It is important during the early stages of 50S assembly. It makes multiple contacts with different domains of the 23S rRNA in the assembled 50S subunit and ribosome. The globular domain of the protein is located near the polypeptide exit tunnel on the outside of the subunit, while an extended beta-hairpin is found that lines the wall of the exit tunnel in the center of the 70S ribosome. The sequence is that of Large ribosomal subunit protein uL22 from Maricaulis maris (strain MCS10) (Caulobacter maris).